A 300-amino-acid chain; its full sequence is Bifunctional protein FolD 2 (300 aa).

NADP(+)-binding positions include 166–168 (GRS), Ser191, and Ile232.

Belongs to the tetrahydrofolate dehydrogenase/cyclohydrolase family. Homodimer.

The catalysed reaction is (6R)-5,10-methylene-5,6,7,8-tetrahydrofolate + NADP(+) = (6R)-5,10-methenyltetrahydrofolate + NADPH. It carries out the reaction (6R)-5,10-methenyltetrahydrofolate + H2O = (6R)-10-formyltetrahydrofolate + H(+). It participates in one-carbon metabolism; tetrahydrofolate interconversion. Functionally, catalyzes the oxidation of 5,10-methylenetetrahydrofolate to 5,10-methenyltetrahydrofolate and then the hydrolysis of 5,10-methenyltetrahydrofolate to 10-formyltetrahydrofolate. In Roseobacter denitrificans (strain ATCC 33942 / OCh 114) (Erythrobacter sp. (strain OCh 114)), this protein is Bifunctional protein FolD 2.